Consider the following 159-residue polypeptide: 17 kDa surface antigen (159 aa).

An N-terminal signal peptide occupies residues 1-19 (MKIISKIIVILLAASMLQA). Cys-20 carries the N-palmitoyl cysteine lipid modification. Residue Cys-20 is the site of S-diacylglycerol cysteine attachment.

It belongs to the rickettsiale 17 kDa surface antigen family.

Its subcellular location is the cell outer membrane. In Rickettsia bellii, this protein is 17 kDa surface antigen (omp).